A 637-amino-acid chain; its full sequence is 1-deoxy-D-xylulose-5-phosphate synthase (637 aa).

Thiamine diphosphate contacts are provided by residues His-73 and 113 to 115 (SHA). Asp-144 is a Mg(2+) binding site. Thiamine diphosphate-binding positions include 145–146 (GA), Asn-174, Tyr-285, and Glu-366. Asn-174 is a binding site for Mg(2+).

This sequence belongs to the transketolase family. DXPS subfamily. Homodimer. Requires Mg(2+) as cofactor. The cofactor is thiamine diphosphate.

The enzyme catalyses D-glyceraldehyde 3-phosphate + pyruvate + H(+) = 1-deoxy-D-xylulose 5-phosphate + CO2. It functions in the pathway metabolic intermediate biosynthesis; 1-deoxy-D-xylulose 5-phosphate biosynthesis; 1-deoxy-D-xylulose 5-phosphate from D-glyceraldehyde 3-phosphate and pyruvate: step 1/1. Catalyzes the acyloin condensation reaction between C atoms 2 and 3 of pyruvate and glyceraldehyde 3-phosphate to yield 1-deoxy-D-xylulose-5-phosphate (DXP). This Streptomyces griseus subsp. griseus (strain JCM 4626 / CBS 651.72 / NBRC 13350 / KCC S-0626 / ISP 5235) protein is 1-deoxy-D-xylulose-5-phosphate synthase.